A 430-amino-acid polypeptide reads, in one-letter code: Neuropeptide FF receptor 1 (430 aa).

Residues 1–20 (MEGEPSQPPNSSWPLSQNGT) are disordered. Residues 1-43 (MEGEPSQPPNSSWPLSQNGTNTEATPATNLTFSSYYQHTSPVA) lie on the Extracellular side of the membrane. A compositionally biased stretch (polar residues) spans 9–20 (PNSSWPLSQNGT). Residues Asn10, Asn18, and Asn29 are each glycosylated (N-linked (GlcNAc...) asparagine). Residues 44-64 (AMFIVAYALIFLLCMVGNTLV) traverse the membrane as a helical segment. Residues 65–80 (CFIVLKNRHMHTVTNM) lie on the Cytoplasmic side of the membrane. The helical transmembrane segment at 81–101 (FILNLAVSDLLVGIFCMPTTL) threads the bilayer. Over 102-117 (VDNLITGWPFDNATCK) the chain is Extracellular. N-linked (GlcNAc...) asparagine glycosylation is present at Asn113. A disulfide bond links Cys116 and Cys203. A helical transmembrane segment spans residues 118-138 (MSGLVQGMSVSASVFTLVAIA). The Cytoplasmic portion of the chain corresponds to 139–158 (VERFRCIVHPFREKLTLRKA). A helical membrane pass occupies residues 159–179 (LVTIAVIWALALLIMCPSAVT). The Extracellular portion of the chain corresponds to 180–214 (LTVTREEHHFMVDARNRSYPLYSCWEAWPEKGMRR). Asn195 carries N-linked (GlcNAc...) asparagine glycosylation. Residues 215-235 (VYTTVLFSHIYLAPLALIVVM) form a helical membrane-spanning segment. Residues 236–271 (YARIARKLCQAPGPAPGGEEAADPRASRRRARVVHM) lie on the Cytoplasmic side of the membrane. Residues 272 to 292 (LVMVALFFTLSWLPLWALLLL) traverse the membrane as a helical segment. The Extracellular segment spans residues 293-307 (IDYGQLSAPQLHLVT). A helical membrane pass occupies residues 308–328 (VYAFPFAHWLAFFNSSANPII). At 329 to 430 (YGYFNENFRR…LPLTIPAWDI (102 aa)) the chain is on the cytoplasmic side. A compositionally biased stretch (low complexity) spans 379–404 (SDSGLPSESGPSSGAPRPGRLPLRNG). Positions 379 to 413 (SDSGLPSESGPSSGAPRPGRLPLRNGRVAHHGLPR) are disordered.

Belongs to the G-protein coupled receptor 1 family.

The protein localises to the cell membrane. Receptor for NPAF (A-18-F-amide) and NPFF (F-8-F-amide) neuropeptides, also known as morphine-modulating peptides. Can also be activated by a variety of naturally occurring or synthetic FMRF-amide like ligands. This receptor mediates its action by association with G proteins that activate a phosphatidylinositol-calcium second messenger system. The protein is Neuropeptide FF receptor 1 of Homo sapiens (Human).